Here is a 166-residue protein sequence, read N- to C-terminus: Large ribosomal subunit protein uL10 (166 aa).

This sequence belongs to the universal ribosomal protein uL10 family. As to quaternary structure, part of the ribosomal stalk of the 50S ribosomal subunit. The N-terminus interacts with L11 and the large rRNA to form the base of the stalk. The C-terminus forms an elongated spine to which L12 dimers bind in a sequential fashion forming a multimeric L10(L12)X complex.

Functionally, forms part of the ribosomal stalk, playing a central role in the interaction of the ribosome with GTP-bound translation factors. The protein is Large ribosomal subunit protein uL10 of Shewanella denitrificans (strain OS217 / ATCC BAA-1090 / DSM 15013).